We begin with the raw amino-acid sequence, 268 residues long: Norsolorinic acid ketoreductase nor1 (268 aa).

Positions 32, 79, 108, 182, 186, 213, and 215 each coordinate NADP(+). Tyrosine 182 serves as the catalytic Proton donor. The active-site Lowers pKa of active site Tyr is the lysine 186.

The protein belongs to the short-chain dehydrogenases/reductases (SDR) family.

The protein localises to the cytoplasm. The protein resides in the cytosol. It is found in the vacuole. The catalysed reaction is (1'S)-averantin + NADP(+) = norsolorinic acid + NADPH + H(+). Its pathway is mycotoxin biosynthesis. Its function is as follows. Norsolorinic acid ketoreductase; part of the fragmented gene cluster that mediates the biosynthesis of dothistromin (DOTH), a polyketide toxin very similar in structure to the aflatoxin precursor, versicolorin B. The first step of the pathway is the conversion of acetate to norsolorinic acid (NOR) and requires the fatty acid synthase subunits hexA and hexB, as well as the polyketide synthase pksA. PksA combines a hexanoyl starter unit and 7 malonyl-CoA extender units to synthesize the precursor NOR. The hexanoyl starter unit is provided to the acyl-carrier protein (ACP) domain by the fungal fatty acid synthase hexA/hexB. The second step is the conversion of NOR to averantin (AVN) and requires the norsolorinic acid ketoreductase nor1, which catalyzes the dehydration of norsolorinic acid to form (1'S)-averantin. The cytochrome P450 monooxygenase avnA then catalyzes the hydroxylation of AVN to 5'hydroxyaverantin (HAVN). The next step is performed by adhA that transforms HAVN to averufin (AVF). Averufin might then be converted to hydroxyversicolorone by cypX and avfA. Hydroxyversicolorone is further converted versiconal hemiacetal acetate (VHA) by moxY. VHA is then the substrate for the versiconal hemiacetal acetate esterase est1 to yield versiconal (VAL). Versicolorin B synthase vbsA then converts VAL to versicolorin B (VERB) by closing the bisfuran ring. Then, the activity of the versicolorin B desaturase verB leads to versicolorin A (VERA). DotB, a predicted chloroperoxidase, may perform epoxidation of the A-ring of VERA. Alternatively, a cytochrome P450, such as cypX or avnA could catalyze this step. It is also possible that another, uncharacterized, cytochrome P450 enzyme is responsible for this step. Opening of the epoxide could potentially be achieved by the epoxide hydrolase epoA. However, epoA seems not to be required for DOTH biosynthesis, but other epoxide hydrolases may have the ability to complement this hydrolysis. Alternatively, opening of the epoxide ring could be achieved non-enzymatically. The next step is the deoxygenation of ring A to yield the 5,8-dihydroxyanthraquinone which is most likely catalyzed by the NADPH dehydrogenase encoded by ver1. The last stages of DOTH biosynthesis are proposed to involve hydroxylation of the bisfuran. OrdB and norB might have oxidative roles here. An alternative possibility is that cytochrome P450 monoogenases such as avnA and cypX might perform these steps in addition to previously proposed steps. This chain is Norsolorinic acid ketoreductase nor1, found in Dothistroma septosporum (strain NZE10 / CBS 128990) (Red band needle blight fungus).